Reading from the N-terminus, the 247-residue chain is Proteasome subunit alpha (247 aa).

The protein belongs to the peptidase T1A family. As to quaternary structure, the 20S proteasome core is composed of 14 alpha and 14 beta subunits that assemble into four stacked heptameric rings, resulting in a barrel-shaped structure. The two inner rings, each composed of seven catalytic beta subunits, are sandwiched by two outer rings, each composed of seven alpha subunits. The catalytic chamber with the active sites is on the inside of the barrel. Has a gated structure, the ends of the cylinder being occluded by the N-termini of the alpha-subunits. Is capped at one or both ends by the proteasome regulatory ATPase, PAN.

It is found in the cytoplasm. With respect to regulation, the formation of the proteasomal ATPase PAN-20S proteasome complex, via the docking of the C-termini of PAN into the intersubunit pockets in the alpha-rings, triggers opening of the gate for substrate entry. Interconversion between the open-gate and close-gate conformations leads to a dynamic regulation of the 20S proteasome proteolysis activity. Component of the proteasome core, a large protease complex with broad specificity involved in protein degradation. This chain is Proteasome subunit alpha, found in Methanosarcina thermophila.